A 763-amino-acid chain; its full sequence is Photosystem I P700 chlorophyll a apoprotein A1 (763 aa).

Transmembrane regions (helical) follow at residues 72–95 (IFSA…FHGA), 158–181 (LYVT…FHYH), 197–221 (LNHH…HVSL), 305–323 (TAHH…GHMY), 360–383 (WHAQ…HHMY), 399–425 (LSLF…IFMV), 447–469 (AIIS…LYIH), and 544–562 (FMVH…LILL). Residues Cys-586 and Cys-595 each contribute to the [4Fe-4S] cluster site. Helical transmembrane passes span 602–623 (HVFL…HYSW) and 677–699 (TSAY…MFLF). Residue His-688 participates in chlorophyll a' binding. Residues Met-696 and Tyr-704 each contribute to the chlorophyll a site. Trp-705 serves as a coordination point for phylloquinone. A helical membrane pass occupies residues 737–757 (AVGVAHYLLGGIVTTWSFFLA).

It belongs to the PsaA/PsaB family. As to quaternary structure, the PsaA/B heterodimer binds the P700 chlorophyll special pair and subsequent electron acceptors. PSI consists of a core antenna complex that captures photons, and an electron transfer chain that converts photonic excitation into a charge separation. The cyanobacterial PSI reaction center is composed of one copy each of PsaA,B,C,D,E,F,I,J,K,L,M and X, and forms trimeric complexes. It depends on PSI electron transfer chain: 5 chlorophyll a, 1 chlorophyll a', 2 phylloquinones and 3 4Fe-4S clusters. PSI core antenna: 90 chlorophyll a, 22 carotenoids, 3 phospholipids and 1 galactolipid. P700 is a chlorophyll a/chlorophyll a' dimer, A0 is one or more chlorophyll a, A1 is one or both phylloquinones and FX is a shared 4Fe-4S iron-sulfur center. as a cofactor.

It is found in the cellular thylakoid membrane. It catalyses the reaction reduced [plastocyanin] + hnu + oxidized [2Fe-2S]-[ferredoxin] = oxidized [plastocyanin] + reduced [2Fe-2S]-[ferredoxin]. Functionally, psaA and PsaB bind P700, the primary electron donor of photosystem I (PSI), as well as the electron acceptors A0, A1 and FX. PSI is a plastocyanin/cytochrome c6-ferredoxin oxidoreductase, converting photonic excitation into a charge separation, which transfers an electron from the donor P700 chlorophyll pair to the spectroscopically characterized acceptors A0, A1, FX, FA and FB in turn. Oxidized P700 is reduced on the lumenal side of the thylakoid membrane by plastocyanin or cytochrome c6. The protein is Photosystem I P700 chlorophyll a apoprotein A1 of Synechococcus elongatus (strain ATCC 33912 / PCC 7942 / FACHB-805) (Anacystis nidulans R2).